The primary structure comprises 247 residues: Protein eak-4 (247 aa).

Residue Gly-2 is the site of N-myristoyl glycine attachment.

In terms of tissue distribution, expressed in the 2 embryonic head hypodermal cells XXXL/R.

The protein resides in the cell membrane. In terms of biological role, together with eak-6 and sdf-9, negatively regulates dauer larva formation downstream of the insulin-like receptor daf-2 and in parallel with age-1, pdk-1 and akt-1. The chain is Protein eak-4 from Caenorhabditis elegans.